Here is a 145-residue protein sequence, read N- to C-terminus: D-aminoacyl-tRNA deacylase (145 aa).

The short motif at 137–138 (GP) is the Gly-cisPro motif, important for rejection of L-amino acids element.

The protein belongs to the DTD family. As to quaternary structure, homodimer.

Its subcellular location is the cytoplasm. It catalyses the reaction glycyl-tRNA(Ala) + H2O = tRNA(Ala) + glycine + H(+). The enzyme catalyses a D-aminoacyl-tRNA + H2O = a tRNA + a D-alpha-amino acid + H(+). In terms of biological role, an aminoacyl-tRNA editing enzyme that deacylates mischarged D-aminoacyl-tRNAs. Also deacylates mischarged glycyl-tRNA(Ala), protecting cells against glycine mischarging by AlaRS. Acts via tRNA-based rather than protein-based catalysis; rejects L-amino acids rather than detecting D-amino acids in the active site. By recycling D-aminoacyl-tRNA to D-amino acids and free tRNA molecules, this enzyme counteracts the toxicity associated with the formation of D-aminoacyl-tRNA entities in vivo and helps enforce protein L-homochirality. The chain is D-aminoacyl-tRNA deacylase from Pseudomonas entomophila (strain L48).